A 479-amino-acid chain; its full sequence is Aspartyl/glutamyl-tRNA(Asn/Gln) amidotransferase subunit B (479 aa).

Belongs to the GatB/GatE family. GatB subfamily. As to quaternary structure, heterotrimer of A, B and C subunits.

The enzyme catalyses L-glutamyl-tRNA(Gln) + L-glutamine + ATP + H2O = L-glutaminyl-tRNA(Gln) + L-glutamate + ADP + phosphate + H(+). The catalysed reaction is L-aspartyl-tRNA(Asn) + L-glutamine + ATP + H2O = L-asparaginyl-tRNA(Asn) + L-glutamate + ADP + phosphate + 2 H(+). Functionally, allows the formation of correctly charged Asn-tRNA(Asn) or Gln-tRNA(Gln) through the transamidation of misacylated Asp-tRNA(Asn) or Glu-tRNA(Gln) in organisms which lack either or both of asparaginyl-tRNA or glutaminyl-tRNA synthetases. The reaction takes place in the presence of glutamine and ATP through an activated phospho-Asp-tRNA(Asn) or phospho-Glu-tRNA(Gln). This Streptococcus pyogenes serotype M3 (strain ATCC BAA-595 / MGAS315) protein is Aspartyl/glutamyl-tRNA(Asn/Gln) amidotransferase subunit B.